Here is a 737-residue protein sequence, read N- to C-terminus: Catalase-peroxidase (737 aa).

The interval 1–29 (MTDSPDATTGGCPVAHGDRLPHPTQGGAN) is disordered. The tryptophyl-tyrosyl-methioninium (Trp-Tyr) (with M-253) cross-link spans 101-227 (WHSAGTYRVS…LGATHMGLIY (127 aa)). The active-site Proton acceptor is the His-102. The segment at residues 227 to 253 (YVNPEGPEGKPDPVAAARDIRETFGRM) is a cross-link (tryptophyl-tyrosyl-methioninium (Tyr-Met) (with W-101)). His-268 contributes to the heme b binding site.

Belongs to the peroxidase family. Peroxidase/catalase subfamily. In terms of assembly, homodimer or homotetramer. Requires heme b as cofactor. Post-translationally, formation of the three residue Trp-Tyr-Met cross-link is important for the catalase, but not the peroxidase activity of the enzyme.

It carries out the reaction H2O2 + AH2 = A + 2 H2O. The catalysed reaction is 2 H2O2 = O2 + 2 H2O. In terms of biological role, bifunctional enzyme with both catalase and broad-spectrum peroxidase activity. The chain is Catalase-peroxidase from Saccharopolyspora erythraea (strain ATCC 11635 / DSM 40517 / JCM 4748 / NBRC 13426 / NCIMB 8594 / NRRL 2338).